The sequence spans 626 residues: Receptor-like protein 4 (626 aa).

An N-terminal signal peptide occupies residues 1–22 (MMLRFILASLLLSSFSLYSSLA). At 23–549 (RPAPYALRIS…CGPHLSSGAK (527 aa)) the chain is on the extracellular side. Asn-61, Asn-282, Asn-333, and Asn-417 each carry an N-linked (GlcNAc...) asparagine glycan. LRR repeat units lie at residues 420–444 (RWFI…ISKL), 445–468 (KHLQ…LGSV), 470–492 (SLEV…LGEL), and 493–516 (TSLR…VGGR). 2 N-linked (GlcNAc...) asparagine glycosylation sites follow: Asn-451 and Asn-482. Residue Asn-524 is glycosylated (N-linked (GlcNAc...) asparagine). A helical membrane pass occupies residues 550 to 570 (IGIAFGVSLAFLLIVACAMIW). Over 571–626 (WKRRQNILRAQQIAARGAPYAKKRTHVSHDIQMSRHGHNNHGQARTAVENGPSLLS) the chain is Cytoplasmic. The disordered stretch occupies residues 603-626 (MSRHGHNNHGQARTAVENGPSLLS).

The protein belongs to the RLP family.

The protein localises to the cell membrane. This is Receptor-like protein 4 from Arabidopsis thaliana (Mouse-ear cress).